The sequence spans 362 residues: CLIP domain-containing serine protease B10 (362 aa).

A signal peptide spans 1–19 (MAKVVDCVLLLAFIAVVRG). In terms of domain architecture, Clip spans 22 to 75 (ACRTPDHRDGVCHPVQQCPSVRDEFFNSDRVLSEDEIDYLRKLQCKTKDVTICC). Intrachain disulfides connect cysteine 23-cysteine 74, cysteine 33-cysteine 66, and cysteine 39-cysteine 75. One can recognise a Peptidase S1 domain in the interval 110-361 (IIGGNYTAID…YLDWIRQNIR (252 aa)). Asparagine 114 carries N-linked (GlcNAc...) asparagine glycosylation. Cysteine 140 and cysteine 156 form a disulfide bridge. Catalysis depends on charge relay system residues histidine 155 and aspartate 220. Asparagine 254 is a glycosylation site (N-linked (GlcNAc...) asparagine). Disulfide bonds link cysteine 285–cysteine 300 and cysteine 310–cysteine 337. Serine 314 acts as the Charge relay system in catalysis.

The protein belongs to the peptidase S1 family. CLIP subfamily. In terms of assembly, forms a covalent heterodimer with SRPN2; the interaction inhibits CLIPB10 catalytic activity. In terms of processing, cleaved by an unknown protease into an active form.

Its subcellular location is the secreted. Its activity is regulated as follows. Inhibited by serpin SRPN2. Serine protease which preferentially cleaves after arginine residues. Involved in the innate immune response against parasite P.bergei infection by activating the melanization cascade. Probably in the hemolymph, cleaves and activates prophenoloxidase (PPO), which functions in the formation of pigments such as melanin and other polyphenolic compounds. In the susceptible strain G3, appears to be dispensable for ookinete elimination which occurs by lysis. The chain is CLIP domain-containing serine protease B10 from Anopheles gambiae (African malaria mosquito).